The following is a 443-amino-acid chain: Thymidine phosphorylase (443 aa).

It belongs to the thymidine/pyrimidine-nucleoside phosphorylase family. As to quaternary structure, homodimer.

It catalyses the reaction thymidine + phosphate = 2-deoxy-alpha-D-ribose 1-phosphate + thymine. It participates in pyrimidine metabolism; dTMP biosynthesis via salvage pathway; dTMP from thymine: step 1/2. In terms of biological role, the enzymes which catalyze the reversible phosphorolysis of pyrimidine nucleosides are involved in the degradation of these compounds and in their utilization as carbon and energy sources, or in the rescue of pyrimidine bases for nucleotide synthesis. The polypeptide is Thymidine phosphorylase (Shewanella putrefaciens (strain CN-32 / ATCC BAA-453)).